Here is a 286-residue protein sequence, read N- to C-terminus: Bifunctional protein FolD (286 aa).

Residues 166 to 168 (GRS) and S191 each bind NADP(+).

The protein belongs to the tetrahydrofolate dehydrogenase/cyclohydrolase family. As to quaternary structure, homodimer.

The enzyme catalyses (6R)-5,10-methylene-5,6,7,8-tetrahydrofolate + NADP(+) = (6R)-5,10-methenyltetrahydrofolate + NADPH. The catalysed reaction is (6R)-5,10-methenyltetrahydrofolate + H2O = (6R)-10-formyltetrahydrofolate + H(+). Its pathway is one-carbon metabolism; tetrahydrofolate interconversion. Catalyzes the oxidation of 5,10-methylenetetrahydrofolate to 5,10-methenyltetrahydrofolate and then the hydrolysis of 5,10-methenyltetrahydrofolate to 10-formyltetrahydrofolate. This is Bifunctional protein FolD from Lactiplantibacillus plantarum (strain ATCC BAA-793 / NCIMB 8826 / WCFS1) (Lactobacillus plantarum).